Consider the following 59-residue polypeptide: Insertion element IS986 uncharacterized 6.6 kDa protein (59 aa).

Positions 1-26 (MRKWVRQAQVDAGARPGTTTEESAEI) are disordered.

Belongs to the transposase 8 family.

In Mycobacterium tuberculosis, this protein is Insertion element IS986 uncharacterized 6.6 kDa protein.